The primary structure comprises 388 residues: MPYLQPPRPHPHPHPTSRLSRASPPSPFPFFPAGTSRSGRLQPVPVSGHSASRVSKGKFAVAAVTLDDYLPMRSTEVKNRTSTDGIKSLRLITAVKTPYLPDGRFDLEAYDSLINTQINGGAEGVIVGGTTGEGHLMSWDEHIMLIGHTVNCFGANIKVIGNTGSNSTREAVHATEQGFAVGMHAALHVNPYYGKTSTEGLISHFKEVLPMGPTIIYNVPSRTSQDIPPPVIEALSSYSNMAGVKECVGHERVKCYTDKGISIWSGNDDECHDSRWKYGATGVISVASNLVPGLMHSLMFEGENAALNEKLLPLMKWLFCEPNPIGLNTALAQLGVVRPVFRLPYTPLPLEKRVEFVRIVEAIGRENFVGQKESRVLDDDDFVLISRY.

Residues 1-51 (MPYLQPPRPHPHPHPTSRLSRASPPSPFPFFPAGTSRSGRLQPVPVSGHSA) form a disordered region. Residues 1–62 (MPYLQPPRPH…RVSKGKFAVA (62 aa)) constitute a chloroplast transit peptide. T131 lines the pyruvate pocket. Y217 functions as the Proton donor/acceptor in the catalytic mechanism. K245 functions as the Schiff-base intermediate with substrate in the catalytic mechanism. I284 contacts pyruvate.

Belongs to the DapA family. Tetramer of modified subunits derived from two genes in different combinations.

The protein localises to the plastid. It localises to the chloroplast. The catalysed reaction is L-aspartate 4-semialdehyde + pyruvate = (2S,4S)-4-hydroxy-2,3,4,5-tetrahydrodipicolinate + H2O + H(+). The protein operates within amino-acid biosynthesis; L-lysine biosynthesis via DAP pathway; (S)-tetrahydrodipicolinate from L-aspartate: step 3/4. Sensitive to lysine inhibition. This inhibition increase in an allosteric manner with increasing concentration of the inhibitor. In terms of biological role, catalyzes the condensation of (S)-aspartate-beta-semialdehyde [(S)-ASA] and pyruvate to 4-hydroxy-tetrahydrodipicolinate (HTPA). This is 4-hydroxy-tetrahydrodipicolinate synthase 1, chloroplastic from Triticum aestivum (Wheat).